We begin with the raw amino-acid sequence, 185 residues long: MIENIKKDAQERMGKCVDATKNQMAKVRTGRAHPSLLDSIQVSYYGTMTPLNQVANVGVEDSRTLSVTVFDRSAIQAVEKAIMSSDLGLNPMSAGATLRIPLPALTEERRKDFIKVVRNEAENGRIAIRNVRRDAISEVKKLEKAKACTEDDVRRSEEEVQKFTDAHIKKIDEILAAKEIELMEV.

This sequence belongs to the RRF family.

The protein resides in the cytoplasm. In terms of biological role, responsible for the release of ribosomes from messenger RNA at the termination of protein biosynthesis. May increase the efficiency of translation by recycling ribosomes from one round of translation to another. The chain is Ribosome-recycling factor from Shewanella baltica (strain OS223).